Here is a 124-residue protein sequence, read N- to C-terminus: Protein ApaG (124 aa).

Positions 1 to 124 constitute an ApaG domain; it reads MSRYELTVQV…FALAMPRMLH (124 aa).

The protein is Protein ApaG of Ralstonia nicotianae (strain ATCC BAA-1114 / GMI1000) (Ralstonia solanacearum).